The chain runs to 743 residues: Type VI secretion system spike protein VgrG1 (743 aa).

It belongs to the VgrG protein family.

The protein resides in the secreted. The catalysed reaction is L-arginyl-[protein] + NAD(+) = N(omega)-(ADP-D-ribosyl)-L-arginyl-[protein] + nicotinamide + H(+). Part of the type VI secretion system specialized secretion system, which delivers several virulence factors in both prokaryotic and eukaryotic cells during infection. Acts directly as an secreted effector with an actin ADP-ribosyltransferase activity that disrupts the host actin cytoskeleton, leading to a decrease in host cell viability and an increase in apoptosis. The polypeptide is Type VI secretion system spike protein VgrG1 (vgrG1) (Aeromonas hydrophila subsp. hydrophila (strain ATCC 7966 / DSM 30187 / BCRC 13018 / CCUG 14551 / JCM 1027 / KCTC 2358 / NCIMB 9240 / NCTC 8049)).